The following is a 460-amino-acid chain: MDSELMHSIVGSYHKPPERVFVPSFTQNEPSQNCHPANLEVTSPKILHSPNSQALILALKTLQEKIHRLELERTQAEDNLNILSREAAQYKKALENETNERNLAHQELIKQKKDISIQLSSAQSRCTLLEKQLEYTKRMVLNVEREKNMILEQQAQLQREKEQDQMKLYAKLEKLDVLEKECFRLTTTQKTAEDKIKHLEEKLKEEEHQRKLFQDKASELQTGLEISKIIMSSVSNLKHSKEKKKSSKKTKCIKRRPPWQICSKFGALPFVAEKMRQHRDPHILQKPFNVTETRCLPKPSRTTSWCKAIPPDSEKSISICDNLSELLMAMQDELDQMSMEHQELLKQMKETESHSVCDDIECELECLLKKMEIKGEQISKLKKHQDSVCKLQQKVQNSKMSEASGIQQEDSYPKGSKNIKNSPRKCLTDTNLFQKNSSFHPIRVHNLQMKLRRDDIMWEQ.

Serine 49 is subject to Phosphoserine. Coiled coils occupy residues asparagine 51 to lysine 228 and isoleucine 317 to histidine 384. Positions lysine 399–aspartate 410 are enriched in polar residues. Residues lysine 399–proline 423 form a disordered region.

The protein belongs to the translokin family.

It is found in the cytoplasm. Its subcellular location is the cytoskeleton. It localises to the microtubule organizing center. The protein resides in the centrosome. Centrosomal protein which may be required for microtubule attachment to centrosomes. The chain is Centrosomal protein CEP57L1 (CEP57L1) from Homo sapiens (Human).